We begin with the raw amino-acid sequence, 587 residues long: Nucleoporin p58/p45 (587 aa).

5 consecutive repeat copies span residues 7–8 (FG), 30–31 (FG), 44–45 (FG), 63–64 (FG), and 68–69 (FG). The interval 7–567 (FGSGTLGSTT…VSNPASAGFG (561 aa)) is 14 X 2 AA repeats of F-G. Residues 196–236 (TSAASNEGLGGIDFSTSSDKKSDKTGTRPEDSKALKDENLP) form a disordered region. A compositionally biased stretch (basic and acidic residues) spans 213 to 234 (SDKKSDKTGTRPEDSKALKDEN). 2 coiled-coil regions span residues 244–264 (ENLQ…SRMS) and 302–369 (ETAQ…SHIT). Thr319 carries the post-translational modification Phosphothreonine. 9 consecutive repeat copies span residues 476–477 (FG), 480–481 (FG), 501–502 (FG), 507–508 (FG), 517–518 (FG), 519–520 (FG), 533–534 (FG), 556–557 (FG), and 566–567 (FG). Residues 565–587 (GFGTGGQLLQLKRPPAGNKRGKR) are disordered.

The protein belongs to the NUP58 family. As to quaternary structure, component of the p62 complex, a complex at least composed of NUP62, NUP54, and NUP58. Interacts with NUTF2. Interacts with SRP1-alpha and Importin p97 proteins when they are together, but not with SRP1-alpha protein alone. Post-translationally, O-glycosylated.

It localises to the nucleus. The protein localises to the nuclear pore complex. Its subcellular location is the nucleus membrane. In terms of biological role, component of the nuclear pore complex, a complex required for the trafficking across the nuclear membrane. This Mus musculus (Mouse) protein is Nucleoporin p58/p45.